The chain runs to 78 residues: U7-lycotoxin-Ls1e (78 aa).

Positions Met1 to Ala22 are cleaved as a signal peptide. The propeptide occupies Gln23–Gly26.

It belongs to the neurotoxin 19 (CSTX) family. 07 (U7-Lctx) subfamily. Contains 4 disulfide bonds. Expressed by the venom gland.

It is found in the secreted. The chain is U7-lycotoxin-Ls1e from Lycosa singoriensis (Wolf spider).